Reading from the N-terminus, the 159-residue chain is SsrA-binding protein (159 aa).

The interval 133–159 (KKLHDKRETSKERDWNRQKNRLLKERG) is disordered. Positions 137–159 (DKRETSKERDWNRQKNRLLKERG) are enriched in basic and acidic residues.

It belongs to the SmpB family.

The protein localises to the cytoplasm. Its function is as follows. Required for rescue of stalled ribosomes mediated by trans-translation. Binds to transfer-messenger RNA (tmRNA), required for stable association of tmRNA with ribosomes. tmRNA and SmpB together mimic tRNA shape, replacing the anticodon stem-loop with SmpB. tmRNA is encoded by the ssrA gene; the 2 termini fold to resemble tRNA(Ala) and it encodes a 'tag peptide', a short internal open reading frame. During trans-translation Ala-aminoacylated tmRNA acts like a tRNA, entering the A-site of stalled ribosomes, displacing the stalled mRNA. The ribosome then switches to translate the ORF on the tmRNA; the nascent peptide is terminated with the 'tag peptide' encoded by the tmRNA and targeted for degradation. The ribosome is freed to recommence translation, which seems to be the essential function of trans-translation. This chain is SsrA-binding protein, found in Sinorhizobium medicae (strain WSM419) (Ensifer medicae).